The primary structure comprises 317 residues: Orange carotenoid-binding protein (317 aa).

The OCP N-terminal domain maps to 18–169 (ADVVPATIAR…DMGFDTSKLG (152 aa)). 3 residues coordinate 3'-hydroxyechinenone: L37, Y203, and W290.

This sequence belongs to the orange carotenoid-binding protein family. Homodimer. Requires 3'-hydroxyechinenone as cofactor. Post-translationally, proteolytically cleaved into a red 16.7 kDa form named red carotenoid-binding protein (RCP) which lacks 15 residues from the N-terminus and approximately 150 residues from the C-terminus.

Its subcellular location is the cellular thylakoid membrane. In terms of biological role, acts as a blue-light photoreceptor and photo-protectant. Essential for inhibiting damaged induced by excess blue-green light via a process known as non-photochemical quenching (NPQ). Binding carotenoids improves OCP's intrinsic photoprotectant activity by broadening its absorption spectrum and facilitating the dissipation of absorbed energy. In the dark or dim light the stable inactive form (OCP-O) is orange, upon illumination with blue-green light it converts to a metastable active red form (OCP-R), inducing energy dissipation, quenching cellular fluorescence via NPQ. The sequence is that of Orange carotenoid-binding protein from Limnospira maxima (Arthrospira maxima).